The sequence spans 417 residues: Serine hydroxymethyltransferase (417 aa).

Residues Leu-121 and 125–127 (GHL) contribute to the (6S)-5,6,7,8-tetrahydrofolate site. The residue at position 229 (Lys-229) is an N6-(pyridoxal phosphate)lysine. (6S)-5,6,7,8-tetrahydrofolate is bound at residue 355–357 (SPF).

Belongs to the SHMT family. In terms of assembly, homodimer. It depends on pyridoxal 5'-phosphate as a cofactor.

The protein localises to the cytoplasm. It carries out the reaction (6R)-5,10-methylene-5,6,7,8-tetrahydrofolate + glycine + H2O = (6S)-5,6,7,8-tetrahydrofolate + L-serine. It participates in one-carbon metabolism; tetrahydrofolate interconversion. The protein operates within amino-acid biosynthesis; glycine biosynthesis; glycine from L-serine: step 1/1. In terms of biological role, catalyzes the reversible interconversion of serine and glycine with tetrahydrofolate (THF) serving as the one-carbon carrier. This reaction serves as the major source of one-carbon groups required for the biosynthesis of purines, thymidylate, methionine, and other important biomolecules. Also exhibits THF-independent aldolase activity toward beta-hydroxyamino acids, producing glycine and aldehydes, via a retro-aldol mechanism. The protein is Serine hydroxymethyltransferase of Shewanella baltica (strain OS155 / ATCC BAA-1091).